The sequence spans 461 residues: Argininosuccinate lyase (461 aa).

Belongs to the lyase 1 family. Argininosuccinate lyase subfamily.

The protein resides in the cytoplasm. The enzyme catalyses 2-(N(omega)-L-arginino)succinate = fumarate + L-arginine. It participates in amino-acid biosynthesis; L-arginine biosynthesis; L-arginine from L-ornithine and carbamoyl phosphate: step 3/3. This is Argininosuccinate lyase from Dehalococcoides mccartyi (strain ATCC BAA-2100 / JCM 16839 / KCTC 5957 / BAV1).